The sequence spans 257 residues: Flavin-dependent thymidylate synthase (257 aa).

Residues 1 to 202 form the ThyX domain; it reads MNVKLVSYTR…PRLFRYVGPN (202 aa). FAD-binding positions include S55, 79 to 81, and Q87; that span reads RHR. DUMP is bound by residues 76–79, 87–91, and R141; these read QLVR and QMSHR. The ThyX motif motif lies at 79–89; the sequence is RHRVASYTQMS. Residues 157–159 and N163 each bind FAD; that span reads NAR. R168 provides a ligand contact to dUMP. Catalysis depends on R168, which acts as the Involved in ionization of N3 of dUMP, leading to its activation.

The protein belongs to the thymidylate synthase ThyX family. As to quaternary structure, homotetramer. Requires FAD as cofactor.

It catalyses the reaction dUMP + (6R)-5,10-methylene-5,6,7,8-tetrahydrofolate + NADPH + H(+) = dTMP + (6S)-5,6,7,8-tetrahydrofolate + NADP(+). The protein operates within pyrimidine metabolism; dTTP biosynthesis. Its function is as follows. Catalyzes the reductive methylation of 2'-deoxyuridine-5'-monophosphate (dUMP) to 2'-deoxythymidine-5'-monophosphate (dTMP) while utilizing 5,10-methylenetetrahydrofolate (mTHF) as the methyl donor, and NADPH and FADH(2) as the reductant. This chain is Flavin-dependent thymidylate synthase, found in Sulfurisphaera tokodaii (strain DSM 16993 / JCM 10545 / NBRC 100140 / 7) (Sulfolobus tokodaii).